The following is a 343-amino-acid chain: Large ribosomal subunit protein uL3 (343 aa).

Disordered stretches follow at residues 1-31 (MGHR…TPRS) and 238-262 (KGSR…PGQM).

The protein belongs to the universal ribosomal protein uL3 family. As to quaternary structure, part of the 50S ribosomal subunit. Forms a cluster with proteins L14 and L24e.

Functionally, one of the primary rRNA binding proteins, it binds directly near the 3'-end of the 23S rRNA, where it nucleates assembly of the 50S subunit. The polypeptide is Large ribosomal subunit protein uL3 (Sulfurisphaera tokodaii (strain DSM 16993 / JCM 10545 / NBRC 100140 / 7) (Sulfolobus tokodaii)).